The following is a 358-amino-acid chain: Alternative oxidase, mitochondrial (358 aa).

A helical transmembrane segment spans residues L152–L172. The Fe cation site is built by E159, E198, and H201. The helical transmembrane segment at M218–P238 threads the bilayer. Fe cation is bound by residues E249, E306, and H309.

The protein belongs to the alternative oxidase family. It depends on Fe cation as a cofactor.

The protein resides in the mitochondrion inner membrane. Functionally, catalyzes cyanide-resistant oxygen consumption. May increase respiration when the cytochrome respiratory pathway is restricted, or in response to low temperatures. In Monilinia fructicola (Brown rot fungus), this protein is Alternative oxidase, mitochondrial (AOX1).